A 396-amino-acid polypeptide reads, in one-letter code: Ribosomal RNA large subunit methyltransferase I (396 aa).

The region spanning 2–79 is the PUA domain; sequence SVRLVLAKGR…QAESIDIAFF (78 aa).

The protein belongs to the methyltransferase superfamily. RlmI family.

The protein localises to the cytoplasm. It carries out the reaction cytidine(1962) in 23S rRNA + S-adenosyl-L-methionine = 5-methylcytidine(1962) in 23S rRNA + S-adenosyl-L-homocysteine + H(+). Its function is as follows. Specifically methylates the cytosine at position 1962 (m5C1962) of 23S rRNA. The chain is Ribosomal RNA large subunit methyltransferase I from Citrobacter koseri (strain ATCC BAA-895 / CDC 4225-83 / SGSC4696).